Here is a 666-residue protein sequence, read N- to C-terminus: DNA ligase (666 aa).

Residues 31–35, 80–81, and Glu111 contribute to the NAD(+) site; these read DYDFD and SL. Lys113 (N6-AMP-lysine intermediate) is an active-site residue. NAD(+) is bound by residues Arg134, Glu170, Lys285, and Lys309. Cys403, Cys406, Cys421, and Cys427 together coordinate Zn(2+). Residues 587–666 form the BRCT domain; it reads VVSNKLLGKI…ESDFSALLTS (80 aa).

The protein belongs to the NAD-dependent DNA ligase family. LigA subfamily. Mg(2+) serves as cofactor. Requires Mn(2+) as cofactor.

It catalyses the reaction NAD(+) + (deoxyribonucleotide)n-3'-hydroxyl + 5'-phospho-(deoxyribonucleotide)m = (deoxyribonucleotide)n+m + AMP + beta-nicotinamide D-nucleotide.. Functionally, DNA ligase that catalyzes the formation of phosphodiester linkages between 5'-phosphoryl and 3'-hydroxyl groups in double-stranded DNA using NAD as a coenzyme and as the energy source for the reaction. It is essential for DNA replication and repair of damaged DNA. This is DNA ligase from Flavobacterium psychrophilum (strain ATCC 49511 / DSM 21280 / CIP 103535 / JIP02/86).